A 1242-amino-acid polypeptide reads, in one-letter code: DNA-directed RNA polymerase RPB2 homolog (1242 aa).

The segment at 1180-1201 (CRNCGEPAIYNASHPIYKCMNC) adopts a C4-type zinc-finger fold.

The protein belongs to the RNA polymerase beta chain family. As to quaternary structure, part of the viral DNA-directed RNA polymerase that consists of 8 polII-like subunits (RPB1, RPB2, RPB3, RPB5, RPB6, RPB7, RPB9, RPB10), a capping enzyme and a termination factor.

The protein localises to the host cytoplasm. It is found in the virion. It carries out the reaction RNA(n) + a ribonucleoside 5'-triphosphate = RNA(n+1) + diphosphate. Its function is as follows. Catalytic component of the DNA-directed RNA polymerase (RNAP) that catalyzes the transcription in the cytoplasm of viral DNA into RNA using the four ribonucleoside triphosphates as substrates. Forms the polymerase active center together with RPB1. Part of the core element with the central large cleft, the clamp element that moves to open and close the cleft and the jaws that are thought to grab the incoming DNA template. In African swine fever virus (isolate Pig/Kenya/KEN-50/1950) (ASFV), this protein is DNA-directed RNA polymerase RPB2 homolog.